A 98-amino-acid polypeptide reads, in one-letter code: Putative membrane protein insertion efficiency factor (98 aa).

Belongs to the UPF0161 family.

It localises to the cell inner membrane. In terms of biological role, could be involved in insertion of integral membrane proteins into the membrane. This chain is Putative membrane protein insertion efficiency factor, found in Cupriavidus pinatubonensis (strain JMP 134 / LMG 1197) (Cupriavidus necator (strain JMP 134)).